The following is a 260-amino-acid chain: Ribosomal RNA small subunit methyltransferase G (260 aa).

S-adenosyl-L-methionine-binding residues include G111, F116, and R181.

It belongs to the methyltransferase superfamily. RNA methyltransferase RsmG family.

It localises to the cytoplasm. The enzyme catalyses guanosine(527) in 16S rRNA + S-adenosyl-L-methionine = N(7)-methylguanosine(527) in 16S rRNA + S-adenosyl-L-homocysteine. In terms of biological role, specifically methylates the N7 position of guanine in position 527 of 16S rRNA. This Nitrobacter hamburgensis (strain DSM 10229 / NCIMB 13809 / X14) protein is Ribosomal RNA small subunit methyltransferase G.